A 597-amino-acid chain; its full sequence is Gigaxonin (597 aa).

A BTB domain is found at Cys-30–Glu-99. The BACK domain occupies Cys-134 to Leu-236. 6 Kelch repeats span residues Cys-274–Gly-326, Phe-327–Gly-374, Leu-376–Lys-421, Lys-422–Met-468, Leu-470–Ala-522, and Ser-528–Arg-574.

As to quaternary structure, interacts with TBCB. Interacts with CUL3. Part of a complex that contains CUL3, RBX1 and GAN. Interacts (via BTB domain) with UBA1. Interacts (via Kelch domains) with MAP1B (via C-terminus) and MAP1S (via C-terminus). Ubiquitinated by E3 ubiquitin ligase complex formed by CUL3 and RBX1 and probably targeted for proteasome-independent degradation. As to expression, expressed in brain, heart and muscle (at protein level).

Its subcellular location is the cytoplasm. It localises to the cytoskeleton. It functions in the pathway protein modification; protein ubiquitination. Functionally, probable cytoskeletal component that directly or indirectly plays an important role in neurofilament architecture. May act as a substrate-specific adapter of an E3 ubiquitin-protein ligase complex which mediates the ubiquitination and subsequent proteasomal degradation of target proteins. Controls degradation of TBCB. Controls degradation of MAP1B and MAP1S, and is critical for neuronal maintenance and survival. The protein is Gigaxonin of Mus musculus (Mouse).